The primary structure comprises 281 residues: Ribosomal RNA small subunit methyltransferase A (281 aa).

Residues Asn-18, Leu-20, Gly-45, Glu-66, Asp-91, and Asn-118 each coordinate S-adenosyl-L-methionine.

The protein belongs to the class I-like SAM-binding methyltransferase superfamily. rRNA adenine N(6)-methyltransferase family. RsmA subfamily.

Its subcellular location is the cytoplasm. The catalysed reaction is adenosine(1518)/adenosine(1519) in 16S rRNA + 4 S-adenosyl-L-methionine = N(6)-dimethyladenosine(1518)/N(6)-dimethyladenosine(1519) in 16S rRNA + 4 S-adenosyl-L-homocysteine + 4 H(+). Its function is as follows. Specifically dimethylates two adjacent adenosines (A1518 and A1519) in the loop of a conserved hairpin near the 3'-end of 16S rRNA in the 30S particle. May play a critical role in biogenesis of 30S subunits. In Histophilus somni (strain 129Pt) (Haemophilus somnus), this protein is Ribosomal RNA small subunit methyltransferase A.